The primary structure comprises 130 residues: Small ribosomal subunit protein uS8 (130 aa).

It belongs to the universal ribosomal protein uS8 family. Part of the 30S ribosomal subunit. Contacts proteins S5 and S12.

Functionally, one of the primary rRNA binding proteins, it binds directly to 16S rRNA central domain where it helps coordinate assembly of the platform of the 30S subunit. The protein is Small ribosomal subunit protein uS8 of Haemophilus ducreyi (strain 35000HP / ATCC 700724).